The primary structure comprises 108 residues: Tetrahydromethanopterin S-methyltransferase subunit B (108 aa).

The chain crosses the membrane as a helical span at residues 80 to 100 (AFYGIVVGLAFSGLLALIIFI).

It belongs to the MtrB family. In terms of assembly, the complex is composed of 8 subunits; MtrA, MtrB, MtrC, MtrD, MtrE, MtrF, MtrG and MtrH.

It localises to the cell membrane. It catalyses the reaction 5-methyl-5,6,7,8-tetrahydromethanopterin + coenzyme M + 2 Na(+)(in) = 5,6,7,8-tetrahydromethanopterin + methyl-coenzyme M + 2 Na(+)(out). It functions in the pathway one-carbon metabolism; methanogenesis from CO(2); methyl-coenzyme M from 5,10-methylene-5,6,7,8-tetrahydromethanopterin: step 2/2. In terms of biological role, part of a complex that catalyzes the formation of methyl-coenzyme M and tetrahydromethanopterin from coenzyme M and methyl-tetrahydromethanopterin. This is an energy-conserving, sodium-ion translocating step. The sequence is that of Tetrahydromethanopterin S-methyltransferase subunit B from Methanosarcina acetivorans (strain ATCC 35395 / DSM 2834 / JCM 12185 / C2A).